The following is an 88-amino-acid chain: UPF0297 protein LAR_0520 (88 aa).

Belongs to the UPF0297 family.

The protein is UPF0297 protein LAR_0520 of Limosilactobacillus reuteri subsp. reuteri (strain JCM 1112) (Lactobacillus reuteri).